Here is a 79-residue protein sequence, read N- to C-terminus: D-alanyl carrier protein (79 aa).

In terms of domain architecture, Carrier spans 1-76; sequence MKEQIFDIIE…KIAARVQEKK (76 aa). Residue Ser-34 is modified to O-(pantetheine 4'-phosphoryl)serine.

It belongs to the DltC family. Post-translationally, 4'-phosphopantetheine is transferred from CoA to a specific serine of apo-DCP.

The protein localises to the cytoplasm. The protein operates within cell wall biogenesis; lipoteichoic acid biosynthesis. Its function is as follows. Carrier protein involved in the D-alanylation of lipoteichoic acid (LTA). The loading of thioester-linked D-alanine onto DltC is catalyzed by D-alanine--D-alanyl carrier protein ligase DltA. The DltC-carried D-alanyl group is further transferred to cell membrane phosphatidylglycerol (PG) by forming an ester bond, probably catalyzed by DltD. D-alanylation of LTA plays an important role in modulating the properties of the cell wall in Gram-positive bacteria, influencing the net charge of the cell wall. In Lactococcus lactis subsp. lactis (strain IL1403) (Streptococcus lactis), this protein is D-alanyl carrier protein.